Here is a 315-residue protein sequence, read N- to C-terminus: Ribosomal RNA small subunit methyltransferase H (315 aa).

S-adenosyl-L-methionine-binding positions include 37 to 39, D57, L91, D105, and Q112; that span reads GGH.

This sequence belongs to the methyltransferase superfamily. RsmH family.

Its subcellular location is the cytoplasm. The enzyme catalyses cytidine(1402) in 16S rRNA + S-adenosyl-L-methionine = N(4)-methylcytidine(1402) in 16S rRNA + S-adenosyl-L-homocysteine + H(+). Functionally, specifically methylates the N4 position of cytidine in position 1402 (C1402) of 16S rRNA. This is Ribosomal RNA small subunit methyltransferase H from Syntrophus aciditrophicus (strain SB).